Consider the following 785-residue polypeptide: Terminal nucleotidyltransferase 4A (785 aa).

The tract at residues Ala-56–Glu-184 is disordered. The segment covering Gly-68–Leu-85 has biased composition (pro residues). 2 stretches are compositionally biased toward low complexity: residues Pro-86–Asp-98 and Ser-106–Gly-145. Mg(2+) is bound by residues Asp-290 and Asp-292. The ATP site is built by Gly-353, Lys-378, Ser-396, and Tyr-397. Residues Asn-421–Gly-480 enclose the PAP-associated domain. Residues Asn-481 and Arg-485 each coordinate ATP. The segment covering Pro-593–Ser-611 has biased composition (low complexity). 2 disordered regions span residues Pro-593–Val-625 and Lys-731–Arg-785. Positions Arg-757–His-774 are enriched in basic residues.

It belongs to the DNA polymerase type-B-like family. In terms of assembly, component of a nuclear TRAMP-like complex, an ATP-dependent exosome regulatory complex consisting of a helicase (MTREX), an oligadenylate polymerase (TENT4B or TENT4A), and a substrate specific RNA-binding factor (ZCCHC7 or ZCCHC8). Several TRAMP-like complexes exist with specific compositions and are associated with nuclear, or nucleolar RNA exosomes. Mg(2+) serves as cofactor. Requires Mn(2+) as cofactor.

The protein resides in the cytoplasm. It is found in the nucleus. It localises to the nucleoplasm. It carries out the reaction RNA(n) + ATP = RNA(n)-3'-adenine ribonucleotide + diphosphate. In terms of biological role, terminal nucleotidyltransferase that catalyzes preferentially the transfer of ATP and GTP on RNA 3' poly(A) tail creating a heterogeneous 3' poly(A) tail leading to mRNAs stabilization by protecting mRNAs from active deadenylation. Also functions as a catalytic subunit of a TRAMP-like complex which has a poly(A) RNA polymerase activity and is involved in a post-transcriptional quality control mechanism. Polyadenylation with short oligo(A) tails is required for the degradative activity of the exosome on several of its nuclear RNA substrates. Has no terminal uridylyltransferase activity, and does not play a role in replication-dependent histone mRNA degradation via uridylation. In Mus musculus (Mouse), this protein is Terminal nucleotidyltransferase 4A.